The chain runs to 88 residues: ATP synthase subunit c 1 (88 aa).

The next 2 helical transmembrane spans lie at 4-24 and 53-73; these read FTWVIITAGFGMAFGSLGTAI and IGLAMVESLAIYVFVVSMIIL.

It belongs to the ATPase C chain family. In terms of assembly, F-type ATPases have 2 components, F(1) - the catalytic core - and F(0) - the membrane proton channel. F(1) has five subunits: alpha(3), beta(3), gamma(1), delta(1), epsilon(1). F(0) has three main subunits: a(1), b(2) and c(10-14). The alpha and beta chains form an alternating ring which encloses part of the gamma chain. F(1) is attached to F(0) by a central stalk formed by the gamma and epsilon chains, while a peripheral stalk is formed by the delta and b chains.

The protein localises to the cell inner membrane. Its function is as follows. F(1)F(0) ATP synthase produces ATP from ADP in the presence of a proton or sodium gradient. F-type ATPases consist of two structural domains, F(1) containing the extramembraneous catalytic core and F(0) containing the membrane proton channel, linked together by a central stalk and a peripheral stalk. During catalysis, ATP synthesis in the catalytic domain of F(1) is coupled via a rotary mechanism of the central stalk subunits to proton translocation. Key component of the F(0) channel; it plays a direct role in translocation across the membrane. A homomeric c-ring of between 10-14 subunits forms the central stalk rotor element with the F(1) delta and epsilon subunits. This chain is ATP synthase subunit c 1, found in Syntrophotalea carbinolica (strain DSM 2380 / NBRC 103641 / GraBd1) (Pelobacter carbinolicus).